A 480-amino-acid chain; its full sequence is Cytochrome b-c1 complex subunit 1, mitochondrial (480 aa).

The N-terminal 34 residues, 1–34, are a transit peptide targeting the mitochondrion; sequence MAASAVCRAACSGTQVLLRTRRSPALLRLPALRG. 2 positions are modified to N6-acetyllysine: lysine 111 and lysine 138. Lysine 163 carries the post-translational modification N6-acetyllysine; alternate. Lysine 163 is modified (N6-succinyllysine; alternate). Serine 212 bears the Phosphoserine mark. Threonine 214 carries the post-translational modification Phosphothreonine. At lysine 248 the chain carries N6-acetyllysine.

This sequence belongs to the peptidase M16 family. UQCRC1/QCR1 subfamily. In terms of assembly, component of the ubiquinol-cytochrome c oxidoreductase (cytochrome b-c1 complex, complex III, CIII), a multisubunit enzyme composed of 11 subunits. The complex is composed of 3 respiratory subunits cytochrome b, cytochrome c1 and Rieske protein UQCRFS1, 2 core protein subunits UQCRC1/QCR1 and UQCRC2/QCR2, and 6 low-molecular weight protein subunits UQCRH/QCR6, UQCRB/QCR7, UQCRQ/QCR8, UQCR10/QCR9, UQCR11/QCR10 and subunit 9, the cleavage product of Rieske protein UQCRFS1. The complex exists as an obligatory dimer and forms supercomplexes (SCs) in the inner mitochondrial membrane with NADH-ubiquinone oxidoreductase (complex I, CI) and cytochrome c oxidase (complex IV, CIV), resulting in different assemblies (supercomplex SCI(1)III(2)IV(1) and megacomplex MCI(2)III(2)IV(2)). Interacts with UQCC6. Interacts with STMP1. Acetylation of Lys-138 is observed in liver mitochondria from fasted mice but not from fed mice. As to expression, expressed in neurons and astrocytes of the cerebral cortex and hippocampus (at protein level).

The protein localises to the mitochondrion inner membrane. Component of the ubiquinol-cytochrome c oxidoreductase, a multisubunit transmembrane complex that is part of the mitochondrial electron transport chain which drives oxidative phosphorylation. The respiratory chain contains 3 multisubunit complexes succinate dehydrogenase (complex II, CII), ubiquinol-cytochrome c oxidoreductase (cytochrome b-c1 complex, complex III, CIII) and cytochrome c oxidase (complex IV, CIV), that cooperate to transfer electrons derived from NADH and succinate to molecular oxygen, creating an electrochemical gradient over the inner membrane that drives transmembrane transport and the ATP synthase. The cytochrome b-c1 complex catalyzes electron transfer from ubiquinol to cytochrome c, linking this redox reaction to translocation of protons across the mitochondrial inner membrane, with protons being carried across the membrane as hydrogens on the quinol. In the process called Q cycle, 2 protons are consumed from the matrix, 4 protons are released into the intermembrane space and 2 electrons are passed to cytochrome c. The 2 core subunits UQCRC1/QCR1 and UQCRC2/QCR2 are homologous to the 2 mitochondrial-processing peptidase (MPP) subunits beta-MPP and alpha-MPP respectively, and they seem to have preserved their MPP processing properties. May be involved in the in situ processing of UQCRFS1 into the mature Rieske protein and its mitochondrial targeting sequence (MTS)/subunit 9 when incorporated into complex III. Seems to play an important role in the maintenance of proper mitochondrial function in nigral dopaminergic neurons. This chain is Cytochrome b-c1 complex subunit 1, mitochondrial (Uqcrc1), found in Mus musculus (Mouse).